A 627-amino-acid polypeptide reads, in one-letter code: Glutamine--fructose-6-phosphate aminotransferase [isomerizing] (627 aa).

The active-site Nucleophile; for GATase activity is the cysteine 2. In terms of domain architecture, Glutamine amidotransferase type-2 spans 2–224; sequence CGIVGYIGTQ…NGEIARLTPL (223 aa). SIS domains follow at residues 293–442 and 476–617; these read LPEN…HRQT and LAHE…VDQP. Lysine 622 functions as the For Fru-6P isomerization activity in the catalytic mechanism.

In terms of assembly, homodimer.

The protein localises to the cytoplasm. It carries out the reaction D-fructose 6-phosphate + L-glutamine = D-glucosamine 6-phosphate + L-glutamate. Its function is as follows. Catalyzes the first step in hexosamine metabolism, converting fructose-6P into glucosamine-6P using glutamine as a nitrogen source. This chain is Glutamine--fructose-6-phosphate aminotransferase [isomerizing], found in Nostoc sp. (strain PCC 9229).